The sequence spans 210 residues: NAD(P)H-quinone oxidoreductase subunit I (210 aa).

4Fe-4S ferredoxin-type domains lie at 54–83 and 94–123; these read GRIH…VDWV and YSYS…VTED. Positions 63, 66, 69, 73, 103, 106, 109, and 113 each coordinate [4Fe-4S] cluster.

This sequence belongs to the complex I 23 kDa subunit family. As to quaternary structure, NDH-1 is composed of at least 11 different subunits. [4Fe-4S] cluster is required as a cofactor.

Its subcellular location is the cellular thylakoid membrane. It carries out the reaction a plastoquinone + NADH + (n+1) H(+)(in) = a plastoquinol + NAD(+) + n H(+)(out). The enzyme catalyses a plastoquinone + NADPH + (n+1) H(+)(in) = a plastoquinol + NADP(+) + n H(+)(out). Its function is as follows. NDH-1 shuttles electrons from an unknown electron donor, via FMN and iron-sulfur (Fe-S) centers, to quinones in the respiratory and/or the photosynthetic chain. The immediate electron acceptor for the enzyme in this species is believed to be plastoquinone. Couples the redox reaction to proton translocation, and thus conserves the redox energy in a proton gradient. The polypeptide is NAD(P)H-quinone oxidoreductase subunit I (Synechococcus sp. (strain JA-3-3Ab) (Cyanobacteria bacterium Yellowstone A-Prime)).